We begin with the raw amino-acid sequence, 88 residues long: Small ribosomal subunit protein bS16 (88 aa).

The protein belongs to the bacterial ribosomal protein bS16 family.

In Mycoplasmopsis pulmonis (strain UAB CTIP) (Mycoplasma pulmonis), this protein is Small ribosomal subunit protein bS16.